The chain runs to 288 residues: MAAHRLRQSVGRLFAMGPELGSGRRAFSAFQAFTEVLRLPSKQLTKLVFPLEELHEHFVPGSRPDLHLNIFHPSLEDIARAESFFTASARNRIEYLTSAVRLDHAPDLHRPEVCFIGRSNVGKSSLIKALFSLAPEVEVRVSKKPGHTKKLNFYKVGKYFTLVDMPGYGYRAPEDFVDMVETYLKERKNLMRTFLLVDSVVGIQKADNIAIEMCEEFALPYVMVLTKIDKPSKGHLLKQVLQIQKFVDTKTQGCFPQLFPVSAMTYSGIHLLRCFIADITGNLKTTGF.

Residues 109-282 (HRPEVCFIGR…RCFIADITGN (174 aa)) enclose the EngB-type G domain. GTP contacts are provided by residues 117–124 (GRSNVGKS), 146–150 (GHTKK), 164–167 (DMPG), 226–229 (TKID), and 261–263 (VSA). Residues S124 and T148 each contribute to the Mg(2+) site.

Belongs to the TRAFAC class TrmE-Era-EngA-EngB-Septin-like GTPase superfamily. EngB GTPase family. Mg(2+) is required as a cofactor.

The polypeptide is GTP-binding protein 8 (GTPBP8) (Bos taurus (Bovine)).